Here is a 459-residue protein sequence, read N- to C-terminus: Nucleobindin-1 (459 aa).

An N-terminal signal peptide occupies residues 1-25 (MPTSVPRGAPFLLLPPLLMLSAVLA). Ser-85 bears the Phosphoserine mark. Phosphothreonine is present on Thr-147. Residues 149 to 217 (EARDLELLIQ…QQRRHREHPK (69 aa)) are a coiled coil. Residues 171–217 (HHEEFKRYEMLKEHERRRYLESLGEEQRKEAERKLQEQQRRHREHPK) mediate DNA binding. Residues 192–209 (SLGEEQRKEAERKLQEQQ) show a composition bias toward basic and acidic residues. The disordered stretch occupies residues 192–220 (SLGEEQRKEAERKLQEQQRRHREHPKVNV). Residues 227–320 (LKEVWEELDG…VTLEEFLAST (94 aa)) form a binds to GNAI2 and GNAI3 region. EF-hand domains lie at 239-274 (PNRFNPKTFFILHDINSDGVLDEQELEALFTKELEK) and 291-326 (ERLRMREHVMKNVDTNQDRLVTLEEFLASTQRKEFG). Residues Asp-252, Asn-254, Asp-256, Glu-263, Asp-304, Asn-306, Asp-308, and Glu-315 each contribute to the Ca(2+) site. The GBA motif lies at 302–332 (NVDTNQDRLVTLEEFLASTQRKEFGETAEGW). Residues 340 to 407 (AYTEEELKRF…RKQQQQEQSA (68 aa)) adopt a coiled-coil conformation. At Ser-368 the chain carries Phosphoserine. The tract at residues 393 to 459 (LQMEQRKQQQ…VLPQLDSQHL (67 aa)) is disordered. The span at 433-445 (DQKDVPASEKKVP) shows a compositional bias: basic and acidic residues. Ser-456 is modified (phosphoserine).

Belongs to the nucleobindin family. As to quaternary structure, interacts (via GBA motif) with guanine nucleotide-binding protein G(i) alpha subunits GNAI1, GNAI2 and GNAI3 with higher affinity for GNAI1 and GNAI3 than for GNAI2. Preferentially interacts with inactive rather than active GNAI3. Interaction with GNAI3 is inhibited when NUCB1 binds calcium, probably due to a conformational change which renders the GBA motif inaccessible. In terms of tissue distribution, minor constituent of the mineralized matrix of bone. Detected in calvaria, rib cartilage, liver, kidney, spleen, brain, lung, skeletal and heart muscle with highest expression in calvaria and approximately half the amount in kidney, liver and brain.

It localises to the golgi apparatus. Its subcellular location is the cis-Golgi network membrane. The protein resides in the cytoplasm. It is found in the secreted. Its function is as follows. Major calcium-binding protein of the Golgi which may have a role in calcium homeostasis. Acts as a non-receptor guanine nucleotide exchange factor which binds to and activates alpha subunits of guanine nucleotide-binding proteins (G proteins). The sequence is that of Nucleobindin-1 (Nucb1) from Rattus norvegicus (Rat).